A 52-amino-acid polypeptide reads, in one-letter code: DNA-directed RNA polymerase subunit Rpo12 (52 aa).

Cys13, Cys30, and Cys33 together coordinate Zn(2+).

This sequence belongs to the archaeal Rpo12/eukaryotic RPC10 RNA polymerase subunit family. As to quaternary structure, part of the RNA polymerase complex. Requires Zn(2+) as cofactor.

Its subcellular location is the cytoplasm. It carries out the reaction RNA(n) + a ribonucleoside 5'-triphosphate = RNA(n+1) + diphosphate. Functionally, DNA-dependent RNA polymerase (RNAP) catalyzes the transcription of DNA into RNA using the four ribonucleoside triphosphates as substrates. The sequence is that of DNA-directed RNA polymerase subunit Rpo12 from Pyrobaculum arsenaticum (strain DSM 13514 / JCM 11321 / PZ6).